A 665-amino-acid polypeptide reads, in one-letter code: BTB/POZ domain-containing protein At1g30440 (665 aa).

Positions 28-98 (SDIVVEVGEM…CYGVKLELTA (71 aa)) constitute a BTB domain. The region spanning 214–508 (DWWYEDASML…VQVLFFEQLQ (295 aa)) is the NPH3 domain. Residues 260 to 280 (LKRRRGGPESSGRFSTPLGSG) are disordered. The segment covering 271–280 (GRFSTPLGSG) has biased composition (polar residues). Residue serine 279 is modified to Phosphoserine. Positions 281-306 (NVLSEEEQKNLLEEIQELLRMQKGLV) form a coiled coil. Tyrosine 449 carries the post-translational modification Phosphotyrosine. Residues 626–639 (SAQEGSVSKSNNEN) show a composition bias toward polar residues. Residues 626 to 665 (SAQEGSVSKSNNENVKIEKLKDVKERRGKHKKASSISSER) are disordered. A compositionally biased stretch (basic and acidic residues) spans 640–650 (VKIEKLKDVKE).

It belongs to the NPH3 family.

Its pathway is protein modification; protein ubiquitination. Functionally, may act as a substrate-specific adapter of an E3 ubiquitin-protein ligase complex (CUL3-RBX1-BTB) which mediates the ubiquitination and subsequent proteasomal degradation of target proteins. The sequence is that of BTB/POZ domain-containing protein At1g30440 from Arabidopsis thaliana (Mouse-ear cress).